We begin with the raw amino-acid sequence, 707 residues long: GDNF-inducible zinc finger protein 1 (707 aa).

Positions 31–103 constitute a BTB domain; that stretch reads CDVTVIVDYQ…VYTARVRVKE (73 aa). Polar residues predominate over residues 149 to 165; it reads VEASSGPQVSVTPSSKA. Disordered regions lie at residues 149-221 and 243-309; these read VEAS…PKIR and RRLR…KDGE. Composition is skewed to basic and acidic residues over residues 198 to 213, 243 to 278, and 287 to 298; these read PSKK…KDVA, RRLR…EPAS, and VEREESLQKVEG. 10 C2H2-type zinc fingers span residues 316–338, 347–370, 376–399, 406–428, 434–456, 462–484, 490–512, 518–540, 546–568, and 574–596; these read FQCT…IKYH, YRCD…RHVH, FPCE…LQVH, HRCG…ERTH, YGCT…LRVH, FVCD…KRCH, FMCE…NRIH, FKCE…IKVH, YCCD…HRIH, and YMCN…TSIH. S612 is modified (phosphoserine).

It belongs to the krueppel C2H2-type zinc-finger protein family. In terms of assembly, interacts with NCL.

The protein resides in the cytoplasm. Its subcellular location is the nucleus. It is found in the nucleoplasm. The protein localises to the nucleolus. Its function is as follows. Transcriptional repressor that binds the GZF1 responsive element (GRE) (consensus: 5'-TGCGCN[TG][CA]TATA-3'). May be regulating VSX2/HOX10 expression. The sequence is that of GDNF-inducible zinc finger protein 1 (Gzf1) from Rattus norvegicus (Rat).